Here is a 418-residue protein sequence, read N- to C-terminus: Glutamyl-tRNA reductase (418 aa).

Substrate is bound by residues 49-52, serine 108, 113-115, and glutamine 119; these read TCNR and EPQ. Cysteine 50 acts as the Nucleophile in catalysis. 188 to 193 contacts NADP(+); sequence GAGETI.

This sequence belongs to the glutamyl-tRNA reductase family. As to quaternary structure, homodimer.

It catalyses the reaction (S)-4-amino-5-oxopentanoate + tRNA(Glu) + NADP(+) = L-glutamyl-tRNA(Glu) + NADPH + H(+). It functions in the pathway porphyrin-containing compound metabolism; protoporphyrin-IX biosynthesis; 5-aminolevulinate from L-glutamyl-tRNA(Glu): step 1/2. In terms of biological role, catalyzes the NADPH-dependent reduction of glutamyl-tRNA(Glu) to glutamate 1-semialdehyde (GSA). In Aliivibrio salmonicida (strain LFI1238) (Vibrio salmonicida (strain LFI1238)), this protein is Glutamyl-tRNA reductase.